The primary structure comprises 279 residues: MNGIFLVNKKAGLTSHDIVYQIRKKFNIKKVGHTGTLDPFATGLLIILVGKATKLAFLFDELDKQYDGTIVLGKSYDTDDTTGEVINEAPVSFTEDDLKAILNRIVPTYKQIPPSYSAIKKAGVKAYEAARSGKPLDLPAREVSIYNFTYQINKQTIDFSTHVSKGTYIRSIARDIGLGLNTFGALSVLNRTNIDAYSQNMSKTVEDTELPDLIDHALLFEGVKKIVLNDYLIKLVKNGVVLDERQTTLNEPFIVQDEMGNYIAYYVPDNQQYKLKYLF.

Residue aspartate 38 is the Nucleophile of the active site.

Belongs to the pseudouridine synthase TruB family. Type 1 subfamily.

The catalysed reaction is uridine(55) in tRNA = pseudouridine(55) in tRNA. In terms of biological role, responsible for synthesis of pseudouridine from uracil-55 in the psi GC loop of transfer RNAs. This Acholeplasma laidlawii (strain PG-8A) protein is tRNA pseudouridine synthase B.